The chain runs to 109 residues: Nucleoid-associated protein Spro_1136 (109 aa).

2 disordered regions span residues 1–21 and 90–109; these read MFGK…QEKM and EKMA…KMPF. A compositionally biased stretch (low complexity) spans 11 to 21; it reads MKQAQQMQEKM.

Belongs to the YbaB/EbfC family. Homodimer.

It localises to the cytoplasm. It is found in the nucleoid. In terms of biological role, binds to DNA and alters its conformation. May be involved in regulation of gene expression, nucleoid organization and DNA protection. The chain is Nucleoid-associated protein Spro_1136 from Serratia proteamaculans (strain 568).